Reading from the N-terminus, the 225-residue chain is Probable polyketide biosynthesis zinc-dependent hydrolase BaeB (225 aa).

Zn(2+)-binding residues include H62, H64, D66, H67, H123, D140, and H181.

It belongs to the metallo-beta-lactamase superfamily. Zn(2+) is required as a cofactor.

It is found in the cytoplasm. The protein operates within antibiotic biosynthesis; bacillaene biosynthesis. Its function is as follows. Probably involved in some intermediate steps for the synthesis of the antibiotic polyketide bacillaene which is involved in secondary metabolism. In Bacillus velezensis (strain DSM 23117 / BGSC 10A6 / LMG 26770 / FZB42) (Bacillus amyloliquefaciens subsp. plantarum), this protein is Probable polyketide biosynthesis zinc-dependent hydrolase BaeB (baeB).